We begin with the raw amino-acid sequence, 323 residues long: AA9 family lytic polysaccharide monooxygenase A (323 aa).

The N-terminal stretch at 1–19 (MKSFISLLGLSFLTCHASA) is a signal peptide. Residues histidine 20 and histidine 90 each coordinate Cu(2+). Cysteine 59 and cysteine 175 form a disulfide bridge. Residues histidine 161 and glutamine 170 each contribute to the O2 site. Position 172 (tyrosine 172) interacts with Cu(2+). The N-linked (GlcNAc...) asparagine glycan is linked to asparagine 215. The region spanning 287–323 (AVVQKFGQCGGQGWTGGTTCVAGSTCTATNAYYSQCL) is the CBM1 domain.

It belongs to the polysaccharide monooxygenase AA9 family. Requires Cu(2+) as cofactor.

Its subcellular location is the secreted. The enzyme catalyses [(1-&gt;4)-beta-D-glucosyl]n+m + reduced acceptor + O2 = 4-dehydro-beta-D-glucosyl-[(1-&gt;4)-beta-D-glucosyl]n-1 + [(1-&gt;4)-beta-D-glucosyl]m + acceptor + H2O.. Lytic polysaccharide monooxygenase (LPMO) that depolymerizes crystalline and amorphous polysaccharides via the oxidation of scissile alpha- or beta-(1-4)-glycosidic bonds, yielding C1 and C4 oxidation products. Catalysis by LPMOs requires the reduction of the active-site copper from Cu(II) to Cu(I) by a reducing agent and H(2)O(2) or O(2) as a cosubstrate. The protein is AA9 family lytic polysaccharide monooxygenase A of Botryotinia fuckeliana (strain B05.10) (Noble rot fungus).